Reading from the N-terminus, the 74-residue chain is Exodeoxyribonuclease 7 small subunit (74 aa).

Belongs to the XseB family. In terms of assembly, heterooligomer composed of large and small subunits.

The protein localises to the cytoplasm. It carries out the reaction Exonucleolytic cleavage in either 5'- to 3'- or 3'- to 5'-direction to yield nucleoside 5'-phosphates.. Bidirectionally degrades single-stranded DNA into large acid-insoluble oligonucleotides, which are then degraded further into small acid-soluble oligonucleotides. The polypeptide is Exodeoxyribonuclease 7 small subunit (Actinobacillus pleuropneumoniae serotype 5b (strain L20)).